Reading from the N-terminus, the 305-residue chain is Tyrosine recombinase XerD (305 aa).

In terms of domain architecture, Core-binding (CB) spans 9–94 (MQDFGYVEQF…AIRRLFQYLH (86 aa)). The region spanning 115–299 (RLPKDISEEQ…ATERLKQIHS (185 aa)) is the Tyr recombinase domain. Active-site residues include arginine 155, lysine 179, histidine 251, arginine 254, and histidine 277. Tyrosine 286 serves as the catalytic O-(3'-phospho-DNA)-tyrosine intermediate.

The protein belongs to the 'phage' integrase family. XerD subfamily. As to quaternary structure, forms a cyclic heterotetrameric complex composed of two molecules of XerC and two molecules of XerD.

The protein localises to the cytoplasm. Site-specific tyrosine recombinase, which acts by catalyzing the cutting and rejoining of the recombining DNA molecules. The XerC-XerD complex is essential to convert dimers of the bacterial chromosome into monomers to permit their segregation at cell division. It also contributes to the segregational stability of plasmids. The chain is Tyrosine recombinase XerD from Vibrio vulnificus (strain CMCP6).